A 331-amino-acid chain; its full sequence is 3-dehydroquinate synthase homolog (331 aa).

The protein belongs to the archaeal-type DHQ synthase family.

This chain is 3-dehydroquinate synthase homolog, found in Aquifex aeolicus (strain VF5).